The primary structure comprises 92 residues: Cell division topological specificity factor (92 aa).

It belongs to the MinE family.

Functionally, prevents the cell division inhibition by proteins MinC and MinD at internal division sites while permitting inhibition at polar sites. This ensures cell division at the proper site by restricting the formation of a division septum at the midpoint of the long axis of the cell. The protein is Cell division topological specificity factor of Desulforamulus reducens (strain ATCC BAA-1160 / DSM 100696 / MI-1) (Desulfotomaculum reducens).